The sequence spans 335 residues: Ferrochelatase (335 aa).

H192 and E291 together coordinate Fe cation.

The protein belongs to the ferrochelatase family.

The protein resides in the cytoplasm. It catalyses the reaction heme b + 2 H(+) = protoporphyrin IX + Fe(2+). It functions in the pathway porphyrin-containing compound metabolism; protoheme biosynthesis; protoheme from protoporphyrin-IX: step 1/1. In terms of biological role, catalyzes the ferrous insertion into protoporphyrin IX. This Bdellovibrio bacteriovorus (strain ATCC 15356 / DSM 50701 / NCIMB 9529 / HD100) protein is Ferrochelatase.